The primary structure comprises 224 residues: uncharacterized protein (224 aa).

An N-terminal signal peptide occupies residues 1-19 (MLRHITFTVFITTSMNTLA).

This sequence belongs to the periplasmic pilus chaperone family.

It localises to the periplasm. Functionally, could be required for the biogenesis of a putative fimbria. This is an uncharacterized protein from Escherichia coli (strain K12).